Here is a 205-residue protein sequence, read N- to C-terminus: Endoribonuclease YbeY (205 aa).

3 residues coordinate Zn(2+): H124, H128, and H134. A disordered region spans residues 162-205; sequence GTAPVAPGGEAQVPNEALETSGKRQDHSLGEILPGGMSRRLAGS.

The protein belongs to the endoribonuclease YbeY family. Zn(2+) serves as cofactor.

The protein localises to the cytoplasm. Single strand-specific metallo-endoribonuclease involved in late-stage 70S ribosome quality control and in maturation of the 3' terminus of the 16S rRNA. The protein is Endoribonuclease YbeY of Beijerinckia indica subsp. indica (strain ATCC 9039 / DSM 1715 / NCIMB 8712).